The following is a 199-amino-acid chain: Recombination protein RecR (199 aa).

The segment at 58–73 (CLNCGNIGTSDICDIC) adopts a C4-type zinc-finger fold. In terms of domain architecture, Toprim spans 81–176 (GEICVVEDVA…AVTSLAQGVP (96 aa)).

It belongs to the RecR family.

In terms of biological role, may play a role in DNA repair. It seems to be involved in an RecBC-independent recombinational process of DNA repair. It may act with RecF and RecO. This chain is Recombination protein RecR, found in Dinoroseobacter shibae (strain DSM 16493 / NCIMB 14021 / DFL 12).